The sequence spans 312 residues: Glyoxylate/hydroxypyruvate reductase A (312 aa).

The active site involves Arg227. The Proton donor role is filled by His275.

This sequence belongs to the D-isomer specific 2-hydroxyacid dehydrogenase family. GhrA subfamily.

It is found in the cytoplasm. The catalysed reaction is glycolate + NADP(+) = glyoxylate + NADPH + H(+). The enzyme catalyses (R)-glycerate + NAD(+) = 3-hydroxypyruvate + NADH + H(+). It catalyses the reaction (R)-glycerate + NADP(+) = 3-hydroxypyruvate + NADPH + H(+). Its function is as follows. Catalyzes the NADPH-dependent reduction of glyoxylate and hydroxypyruvate into glycolate and glycerate, respectively. In Enterobacter sp. (strain 638), this protein is Glyoxylate/hydroxypyruvate reductase A.